Reading from the N-terminus, the 342-residue chain is N-acetyl-gamma-glutamyl-phosphate reductase (342 aa).

Cysteine 146 is a catalytic residue.

The protein belongs to the NAGSA dehydrogenase family. Type 1 subfamily.

Its subcellular location is the cytoplasm. The catalysed reaction is N-acetyl-L-glutamate 5-semialdehyde + phosphate + NADP(+) = N-acetyl-L-glutamyl 5-phosphate + NADPH + H(+). The protein operates within amino-acid biosynthesis; L-arginine biosynthesis; N(2)-acetyl-L-ornithine from L-glutamate: step 3/4. In terms of biological role, catalyzes the NADPH-dependent reduction of N-acetyl-5-glutamyl phosphate to yield N-acetyl-L-glutamate 5-semialdehyde. This Frankia casuarinae (strain DSM 45818 / CECT 9043 / HFP020203 / CcI3) protein is N-acetyl-gamma-glutamyl-phosphate reductase.